The sequence spans 427 residues: 3-phosphoshikimate 1-carboxyvinyltransferase (427 aa).

3-phosphoshikimate contacts are provided by K22, S23, and R27. K22 provides a ligand contact to phosphoenolpyruvate. Positions 96 and 124 each coordinate phosphoenolpyruvate. Positions 169, 170, 171, 197, 313, 336, and 340 each coordinate 3-phosphoshikimate. Phosphoenolpyruvate is bound at residue Q171. The Proton acceptor role is filled by D313. The phosphoenolpyruvate site is built by R344, R386, and K411.

It belongs to the EPSP synthase family. Monomer.

Its subcellular location is the cytoplasm. The catalysed reaction is 3-phosphoshikimate + phosphoenolpyruvate = 5-O-(1-carboxyvinyl)-3-phosphoshikimate + phosphate. Its pathway is metabolic intermediate biosynthesis; chorismate biosynthesis; chorismate from D-erythrose 4-phosphate and phosphoenolpyruvate: step 6/7. Its function is as follows. Catalyzes the transfer of the enolpyruvyl moiety of phosphoenolpyruvate (PEP) to the 5-hydroxyl of shikimate-3-phosphate (S3P) to produce enolpyruvyl shikimate-3-phosphate and inorganic phosphate. In Salmonella arizonae (strain ATCC BAA-731 / CDC346-86 / RSK2980), this protein is 3-phosphoshikimate 1-carboxyvinyltransferase.